A 267-amino-acid chain; its full sequence is MSTAQLVVQHLPYLRRYARALTGSQVAGDAYVAATLETLVNEPETLGRSTNVKADLFRVFTRIWNSLSVNGHSDQVQHDLPAEVRLGQITPLPRQAFLLSCLEGFSEEDAGVILDVDVSKVRDLVDEAGRELAADMATEILIIEDEPLIAMDLEALVEGLGHNVIGVARTRTEAVKIASESKRPGLILADIQLADGSSGLDAVNDLLKTFEVPVIFITAYPERFLTGERPEPAFLIAKPFQPANVSAVISQALFFQQSARRREAHNA.

Residues E139–L253 form the Response regulatory domain. D190 carries the 4-aspartylphosphate modification.

Functionally, key regulator for adaptation to epiphytic life (leaf colonizing) of the bacterium. Positively regulates several genes including katE, sodA, hsp20, dps and gloA. However, it is not known whether this regulation is direct or indirect. Also induces several dehydrogenases. The polypeptide is Phyllosphere-induced regulator PhyR (phyR) (Methylorubrum extorquens (strain ATCC 14718 / DSM 1338 / JCM 2805 / NCIMB 9133 / AM1) (Methylobacterium extorquens)).